The primary structure comprises 341 residues: Fructose-1,6-bisphosphatase, cytosolic (341 aa).

Positions 100, 121, 123, and 124 each coordinate Mg(2+). Residues aspartate 124–serine 127, asparagine 215, tyrosine 247, tyrosine 267, and lysine 277 each bind substrate. Position 283 (glutamate 283) interacts with Mg(2+).

This sequence belongs to the FBPase class 1 family. The cofactor is Mg(2+).

The protein localises to the cytoplasm. The catalysed reaction is beta-D-fructose 1,6-bisphosphate + H2O = beta-D-fructose 6-phosphate + phosphate. This Musa acuminata (Banana) protein is Fructose-1,6-bisphosphatase, cytosolic (FBPban1).